A 175-amino-acid chain; its full sequence is uncharacterized protein (175 aa).

Residues 1 to 11 constitute a mitochondrion transit peptide; that stretch reads METWRKGSFRN. The segment at 24 to 92 is disordered; it reads RRLRRQSSVL…PRLYRESSSC (69 aa). A compositionally biased stretch (basic and acidic residues) spans 41–63; that stretch reads GDHEEYSNREVIRELQGRPDGRR.

The protein resides in the mitochondrion. This is an uncharacterized protein from Homo sapiens (Human).